A 310-amino-acid polypeptide reads, in one-letter code: Methionyl-tRNA formyltransferase (310 aa).

111 to 114 (SLLP) is a binding site for (6S)-5,6,7,8-tetrahydrofolate.

Belongs to the Fmt family.

The catalysed reaction is L-methionyl-tRNA(fMet) + (6R)-10-formyltetrahydrofolate = N-formyl-L-methionyl-tRNA(fMet) + (6S)-5,6,7,8-tetrahydrofolate + H(+). Its function is as follows. Attaches a formyl group to the free amino group of methionyl-tRNA(fMet). The formyl group appears to play a dual role in the initiator identity of N-formylmethionyl-tRNA by promoting its recognition by IF2 and preventing the misappropriation of this tRNA by the elongation apparatus. In Afipia carboxidovorans (strain ATCC 49405 / DSM 1227 / KCTC 32145 / OM5) (Oligotropha carboxidovorans), this protein is Methionyl-tRNA formyltransferase.